The primary structure comprises 814 residues: MCSLSTLSPNFSNAYGSKSVSSTASRFPCWQRSNETWKTQSREVIHWTYVVRCKEVLNEARQGHMNLPHVTLQNDLCEREALKEDMPLLNEYKMEECIRYIKNMLGSMDDGRITVSPYDTAWIALIRDIEGRDIPQFPSSLEWIANNQLSDGSWGDEQFFLAYDRLLNTLACVVALTYWKVHADKSEKGILFIKENISKLGDANVEQMTCGFEVVFPALLTKAKDLGIHGIPYDAPVMQEIFATKDRKMERVPKELLHKVPTCLLHNLEGLGNVDALGKLDWPKLLKLQTPKGSYITSPAASAFAVMETKDKDCLAFINYVVNKFNGGAPTVYPVDIYARLWAVDRLQRLGISRFFEPEIKNCLDYVYRFWTEKGVFSARESEFCDIDDTSMSIRLLRLHGYDIKPNALKHFKKDNMFTCYVGQGFESPSPIFNLYRASQVLFPGETILEEARDFSYNFLRERLEKNDLLDKWLISKHLPDEIKCGLEMPWYASLPRVEARFYIENYGVDDIWIGKSLYRMPEINDPVYLELAKLDYKRCQTQHQLEWRHIQQWYEDSSLEEFGISKKDLLLAYFLAAASIFEPGRSGQRLAWVKSQIMSHILTTYFSIKEASSSEQRKSSTKLENEQGRGQSRKTTIQRFITIFFGSLQEIMRDANEQIGKDISNLLFDIWRVWLEKLGEGNEEIQEVELLVSTINICGGHIASKDILSHSEYKTLSRLTNKICHQLRQLDMGNEELIAIEWRKNKTTDSIYREIEKDMQLLVQLVLQDSSNGISKDIKQTFLLAAKTFYYRAYFPTEQIGNHISKVLFEPVV.

The N-terminal 52 residues, 1–52, are a transit peptide targeting the chloroplast; sequence MCSLSTLSPNFSNAYGSKSVSSTASRFPCWQRSNETWKTQSREVIHWTYVVR. K248 contacts substrate. D386 and D388 together coordinate Mg(2+). The DXDD motif motif lies at 386–389; the sequence is DIDD. K472 serves as a coordination point for substrate.

It belongs to the terpene synthase family. It depends on Mg(2+) as a cofactor. As to expression, mostly expressed in trichomes of leaves and fruits.

It localises to the plastid. The protein localises to the chloroplast. It catalyses the reaction (2E,6E,10E)-geranylgeranyl diphosphate = 9alpha-copalyl diphosphate. The protein operates within secondary metabolite biosynthesis; terpenoid biosynthesis. Its function is as follows. Involved in the biosynthesis of labdane-type diterpenoid including cleroda-dienols, and peregrinol lactones and furan derivatives, dopaminergic diterpenoids that can bind to dopamine receptors in the human pituitary gland, have probably ability to lower prolactin levels, and are used to treat menstrual cycle disorders (e.g. premenstrual syndrome and mastodynia). Terpene synthase that produces syn-copalyl diphosophate from geranylgeranyl diphosphate (GGPP). This is Syn-copalyl diphosphate synthase TPS3, chloroplastic from Vitex agnus-castus (Chaste tree).